We begin with the raw amino-acid sequence, 352 residues long: Probable dual-specificity RNA methyltransferase RlmN (352 aa).

The Proton acceptor role is filled by Glu92. The 231-residue stretch at 98–328 folds into the Radical SAM core domain; the sequence is YKHGFTACIS…ATIRREMGTD (231 aa). Cys105 and Cys333 are joined by a disulfide. 3 residues coordinate [4Fe-4S] cluster: Cys112, Cys116, and Cys119. S-adenosyl-L-methionine contacts are provided by residues 159-160, Ser191, 214-216, and Asn290; these read GE and SLH. The active-site S-methylcysteine intermediate is Cys333.

It belongs to the radical SAM superfamily. RlmN family. [4Fe-4S] cluster is required as a cofactor.

Its subcellular location is the cytoplasm. The enzyme catalyses adenosine(2503) in 23S rRNA + 2 reduced [2Fe-2S]-[ferredoxin] + 2 S-adenosyl-L-methionine = 2-methyladenosine(2503) in 23S rRNA + 5'-deoxyadenosine + L-methionine + 2 oxidized [2Fe-2S]-[ferredoxin] + S-adenosyl-L-homocysteine. It catalyses the reaction adenosine(37) in tRNA + 2 reduced [2Fe-2S]-[ferredoxin] + 2 S-adenosyl-L-methionine = 2-methyladenosine(37) in tRNA + 5'-deoxyadenosine + L-methionine + 2 oxidized [2Fe-2S]-[ferredoxin] + S-adenosyl-L-homocysteine. Specifically methylates position 2 of adenine 2503 in 23S rRNA and position 2 of adenine 37 in tRNAs. This Alkaliphilus metalliredigens (strain QYMF) protein is Probable dual-specificity RNA methyltransferase RlmN.